The following is a 562-amino-acid chain: Protein FAM222B (562 aa).

2 stretches are compositionally biased toward low complexity: residues 155–167 and 183–201; these read QQALQHAQTLAHA and ALSHPQSLQQPQGLGHPQP. Disordered regions lie at residues 155–203, 219–245, and 537–562; these read QQAL…QPMA, LQHPHNPLLHGGRKMPDSDAPPNVTVS, and AHRAPGNRAPDPTESRSLHIQHPGYR.

Belongs to the FAM222 family.

The protein is Protein FAM222B (FAM222B) of Homo sapiens (Human).